Reading from the N-terminus, the 519-residue chain is Pleckstrin homology domain-containing family A member 8 (519 aa).

One can recognise a PH domain in the interval 1 to 93; that stretch reads MEGVLYKWTN…WLVALGSAKA (93 aa). Thr139 carries the post-translational modification Phosphothreonine. At Ser145 the chain carries Phosphoserine. Thr153 carries the post-translational modification Phosphothreonine. The tract at residues 275–302 is disordered; the sequence is GEENLESHDKDPAQPGSDSVCSPESPWE. The tract at residues 330–473 is glycolipid transfer protein homology domain; the sequence is IPTEAFLASC…EDFVAALTIK (144 aa).

In terms of assembly, homodimer. Interacts with ARF1; the interaction together with phosphatidylinositol 4-phosphate binding is required for FAPP2 GlcCer transfer ability.

The protein resides in the golgi apparatus. The protein localises to the trans-Golgi network membrane. Its subcellular location is the membrane. In terms of biological role, cargo transport protein that is required for apical transport from the trans-Golgi network (TGN). Transports AQP2 from the trans-Golgi network (TGN) to sites of AQP2 phosphorylation. Mediates the non-vesicular transport of glucosylceramide (GlcCer) from the trans-Golgi network (TGN) to the plasma membrane and plays a pivotal role in the synthesis of complex glycosphingolipids. Binding of both phosphatidylinositol 4-phosphate (PIP) and ARF1 are essential for the GlcCer transfer ability. Also required for primary cilium formation, possibly by being involved in the transport of raft lipids to the apical membrane, and for membrane tubulation. The sequence is that of Pleckstrin homology domain-containing family A member 8 (Plekha8) from Mus musculus (Mouse).